The following is a 442-amino-acid chain: tRNA modification GTPase MnmE (442 aa).

Arg-21, Glu-79, and Lys-118 together coordinate (6S)-5-formyl-5,6,7,8-tetrahydrofolate. One can recognise a TrmE-type G domain in the interval 214–367; that stretch reads GFKIAIVGKP…LKEELQNYLN (154 aa). K(+) is bound at residue Asn-224. GTP contacts are provided by residues 224-229, 243-249, and 268-271; these read NVGKSS, SDIAGTT, and DTAG. Residue Ser-228 coordinates Mg(2+). Residues Ser-243, Ile-245, and Thr-248 each coordinate K(+). A Mg(2+)-binding site is contributed by Thr-249. Lys-442 contacts (6S)-5-formyl-5,6,7,8-tetrahydrofolate.

The protein belongs to the TRAFAC class TrmE-Era-EngA-EngB-Septin-like GTPase superfamily. TrmE GTPase family. In terms of assembly, homodimer. Heterotetramer of two MnmE and two MnmG subunits. K(+) is required as a cofactor.

Its subcellular location is the cytoplasm. Exhibits a very high intrinsic GTPase hydrolysis rate. Involved in the addition of a carboxymethylaminomethyl (cmnm) group at the wobble position (U34) of certain tRNAs, forming tRNA-cmnm(5)s(2)U34. The polypeptide is tRNA modification GTPase MnmE (Campylobacter jejuni subsp. jejuni serotype O:23/36 (strain 81-176)).